The following is a 173-amino-acid chain: Transcription factor E (173 aa).

The region spanning 9-92 (ADKAIFAYLH…LWELELDNMY (84 aa)) is the HTH TFE/IIEalpha-type domain.

The protein belongs to the TFE family. Monomer. Interaction with RNA polymerase subunits RpoF and RpoE is necessary for Tfe stimulatory transcription activity. Able to interact with Tbp and RNA polymerase in the absence of DNA promoter. Interacts both with the preinitiation and elongation complexes.

Its function is as follows. Transcription factor that plays a role in the activation of archaeal genes transcribed by RNA polymerase. Facilitates transcription initiation by enhancing TATA-box recognition by TATA-box-binding protein (Tbp), and transcription factor B (Tfb) and RNA polymerase recruitment. Not absolutely required for transcription in vitro, but particularly important in cases where Tbp or Tfb function is not optimal. It dynamically alters the nucleic acid-binding properties of RNA polymerases by stabilizing the initiation complex and destabilizing elongation complexes. Seems to translocate with the RNA polymerase following initiation and acts by binding to the non template strand of the transcription bubble in elongation complexes. In Methanospirillum hungatei JF-1 (strain ATCC 27890 / DSM 864 / NBRC 100397 / JF-1), this protein is Transcription factor E.